The following is a 266-amino-acid chain: Glucosamine-6-phosphate deaminase (266 aa).

D72 functions as the Proton acceptor; for enolization step in the catalytic mechanism. D141 serves as the catalytic For ring-opening step. The active-site Proton acceptor; for ring-opening step is the H143. Residue E148 is the For ring-opening step of the active site.

It belongs to the glucosamine/galactosamine-6-phosphate isomerase family. NagB subfamily. In terms of assembly, homohexamer.

It catalyses the reaction alpha-D-glucosamine 6-phosphate + H2O = beta-D-fructose 6-phosphate + NH4(+). It participates in amino-sugar metabolism; N-acetylneuraminate degradation; D-fructose 6-phosphate from N-acetylneuraminate: step 5/5. Allosterically activated by N-acetylglucosamine 6-phosphate (GlcNAc6P). In terms of biological role, catalyzes the reversible isomerization-deamination of glucosamine 6-phosphate (GlcN6P) to form fructose 6-phosphate (Fru6P) and ammonium ion. The chain is Glucosamine-6-phosphate deaminase from Cronobacter sakazakii (strain ATCC BAA-894) (Enterobacter sakazakii).